The sequence spans 94 residues: uncharacterized protein (94 aa).

This sequence belongs to the phD/YefM antitoxin family.

This is an uncharacterized protein from Synechocystis sp. (strain ATCC 27184 / PCC 6803 / Kazusa).